An 859-amino-acid polypeptide reads, in one-letter code: Protein SEY1 (859 aa).

The Cytoplasmic segment spans residues 1-742; it reads MMMNSHFAGV…KRSAIGGITQ (742 aa). The region spanning 49–291 is the GB1/RHD3-type G domain; the sequence is GFNYHLISVF…FQPQYHRRIP (243 aa). GTP is bound at residue 59–66; that stretch reads GSQSTGKS. Residues 476-496 adopt a coiled-coil conformation; that stretch reads FEHELKVYRKDLDDVSGRLRK. Residues 525-544 are disordered; sequence LGTGRGGSGAPEHGERPPSE. The chain crosses the membrane as a helical span at residues 743–763; that stretch reads VPLYFYGLLVALGWNEIVAVL. The Lumenal portion of the chain corresponds to 764 to 766; the sequence is RNP. The chain crosses the membrane as a helical span at residues 767–787; the sequence is VYFIFLILCAVGAYVTYTLNL. Over 788-859 the chain is Cytoplasmic; it reads WGPMIRMGNA…DAEVEDLDDI (72 aa). Positions 816–859 are disordered; it reads SSESGRQAMAMSGNQPRGESVRMNRLNGNGKKDEDAEVEDLDDI. Positions 850–859 are enriched in acidic residues; sequence DAEVEDLDDI.

Belongs to the TRAFAC class dynamin-like GTPase superfamily. GB1/RHD3 GTPase family. RHD3 subfamily.

It localises to the endoplasmic reticulum membrane. Cooperates with the reticulon proteins and tubule-shaping DP1 family proteins to generate and maintain the structure of the tubular endoplasmic reticulum network. Has GTPase activity, which is required for its function in ER organization. The sequence is that of Protein SEY1 from Phaeosphaeria nodorum (strain SN15 / ATCC MYA-4574 / FGSC 10173) (Glume blotch fungus).